The primary structure comprises 423 residues: UPF0229 protein PSPA7_0730 (423 aa).

The interval alanine 84–glycine 107 is disordered. Residues serine 92–lysine 102 show a composition bias toward gly residues.

This sequence belongs to the UPF0229 family.

The protein is UPF0229 protein PSPA7_0730 of Pseudomonas paraeruginosa (strain DSM 24068 / PA7) (Pseudomonas aeruginosa (strain PA7)).